Reading from the N-terminus, the 199-residue chain is Recombination protein RecR (199 aa).

The segment at 56-71 (CQRCNTFTEGDICERC) adopts a C4-type zinc-finger fold. The Toprim domain maps to 79 to 174 (ELLCVVETPV…GVTRIARGVP (96 aa)).

It belongs to the RecR family.

Functionally, may play a role in DNA repair. It seems to be involved in an RecBC-independent recombinational process of DNA repair. It may act with RecF and RecO. The sequence is that of Recombination protein RecR from Dechloromonas aromatica (strain RCB).